Reading from the N-terminus, the 275-residue chain is Undecaprenyl-diphosphatase (275 aa).

Helical transmembrane passes span 4–24 (IYGL…EFLP), 54–74 (LGSI…LFGL), 92–112 (LHLY…LMFY), 123–143 (YVMY…LIHD), 154–174 (ISYL…LPGF), 194–214 (AFEF…ILDL), 228–248 (MFII…KLFW), and 255–275 (SFIP…LILI).

It belongs to the UppP family.

It is found in the cell membrane. It carries out the reaction di-trans,octa-cis-undecaprenyl diphosphate + H2O = di-trans,octa-cis-undecaprenyl phosphate + phosphate + H(+). In terms of biological role, catalyzes the dephosphorylation of undecaprenyl diphosphate (UPP). Confers resistance to bacitracin. In Baumannia cicadellinicola subsp. Homalodisca coagulata, this protein is Undecaprenyl-diphosphatase.